The sequence spans 252 residues: Imidazole glycerol phosphate synthase subunit HisF (252 aa).

Catalysis depends on residues D11 and D130.

This sequence belongs to the HisA/HisF family. As to quaternary structure, heterodimer of HisH and HisF.

The protein localises to the cytoplasm. It catalyses the reaction 5-[(5-phospho-1-deoxy-D-ribulos-1-ylimino)methylamino]-1-(5-phospho-beta-D-ribosyl)imidazole-4-carboxamide + L-glutamine = D-erythro-1-(imidazol-4-yl)glycerol 3-phosphate + 5-amino-1-(5-phospho-beta-D-ribosyl)imidazole-4-carboxamide + L-glutamate + H(+). It functions in the pathway amino-acid biosynthesis; L-histidine biosynthesis; L-histidine from 5-phospho-alpha-D-ribose 1-diphosphate: step 5/9. Functionally, IGPS catalyzes the conversion of PRFAR and glutamine to IGP, AICAR and glutamate. The HisF subunit catalyzes the cyclization activity that produces IGP and AICAR from PRFAR using the ammonia provided by the HisH subunit. In Staphylococcus aureus (strain USA300), this protein is Imidazole glycerol phosphate synthase subunit HisF.